A 576-amino-acid polypeptide reads, in one-letter code: Arginine--tRNA ligase (576 aa).

The short motif at 122–132 (PNVAKQMHVGH) is the 'HIGH' region element.

Belongs to the class-I aminoacyl-tRNA synthetase family. As to quaternary structure, monomer.

The protein resides in the cytoplasm. It catalyses the reaction tRNA(Arg) + L-arginine + ATP = L-arginyl-tRNA(Arg) + AMP + diphosphate. This is Arginine--tRNA ligase from Proteus mirabilis (strain HI4320).